The primary structure comprises 850 residues: Protein translocase subunit SecA 2 (850 aa).

ATP contacts are provided by residues Q83, 101-105 (GEGKT), and D491.

The protein belongs to the SecA family. As to quaternary structure, monomer and homodimer. Part of the essential Sec protein translocation apparatus which comprises SecA, SecYEG and auxiliary proteins SecDF. Other proteins may also be involved.

Its subcellular location is the cell membrane. It localises to the cytoplasm. The catalysed reaction is ATP + H2O + cellular proteinSide 1 = ADP + phosphate + cellular proteinSide 2.. In terms of biological role, part of the Sec protein translocase complex. Interacts with the SecYEG preprotein conducting channel. Has a central role in coupling the hydrolysis of ATP to the transfer of proteins into and across the cell membrane, serving as an ATP-driven molecular motor driving the stepwise translocation of polypeptide chains across the membrane. The protein is Protein translocase subunit SecA 2 of Mycolicibacterium vanbaalenii (strain DSM 7251 / JCM 13017 / BCRC 16820 / KCTC 9966 / NRRL B-24157 / PYR-1) (Mycobacterium vanbaalenii).